Here is a 347-residue protein sequence, read N- to C-terminus: Ribosomal RNA small subunit methyltransferase C (347 aa).

The protein belongs to the methyltransferase superfamily. RsmC family. In terms of assembly, monomer.

The protein resides in the cytoplasm. It catalyses the reaction guanosine(1207) in 16S rRNA + S-adenosyl-L-methionine = N(2)-methylguanosine(1207) in 16S rRNA + S-adenosyl-L-homocysteine + H(+). Specifically methylates the guanine in position 1207 of 16S rRNA in the 30S particle. The polypeptide is Ribosomal RNA small subunit methyltransferase C (Yersinia enterocolitica serotype O:8 / biotype 1B (strain NCTC 13174 / 8081)).